The sequence spans 866 residues: Probable beta-glucosidase F (866 aa).

The signal sequence occupies residues 1-20; sequence MAAFPAYLALLSYLVPGALS. N-linked (GlcNAc...) asparagine glycans are attached at residues asparagine 65, asparagine 73, and asparagine 257. Residue aspartate 285 is part of the active site. Residues asparagine 328, asparagine 360, asparagine 395, asparagine 421, asparagine 474, asparagine 659, asparagine 664, and asparagine 724 are each glycosylated (N-linked (GlcNAc...) asparagine). The interval 725–748 is disordered; the sequence is SSKTYPYPDGYTTEPKPAPRAGGA.

This sequence belongs to the glycosyl hydrolase 3 family.

The protein resides in the secreted. It catalyses the reaction Hydrolysis of terminal, non-reducing beta-D-glucosyl residues with release of beta-D-glucose.. The protein operates within glycan metabolism; cellulose degradation. Functionally, beta-glucosidases are one of a number of cellulolytic enzymes involved in the degradation of cellulosic biomass. Catalyzes the last step releasing glucose from the inhibitory cellobiose. In Aspergillus oryzae (strain ATCC 42149 / RIB 40) (Yellow koji mold), this protein is Probable beta-glucosidase F (bglF).